A 432-amino-acid chain; its full sequence is Probable exopolygalacturonase X (432 aa).

Residues 1–23 form the signal peptide; it reads MKFSYSFVQVVTLLLSLSPSVEG. Asn113, Asn129, and Asn199 each carry an N-linked (GlcNAc...) asparagine glycan. A PbH1 1 repeat occupies 231–252; it reads SDNIVIQNSVINNGDDCVSFKP. Asp245 acts as the Proton donor in catalysis. Cys247 and Cys264 form a disulfide bridge. Residues Asn253 and Asn265 are each glycosylated (N-linked (GlcNAc...) asparagine). PbH1 repeat units follow at residues 254–274, 285–306, and 327–348; these read STNI…SVGS, VQNV…RIKV, and VKNV…EVTQ. The active site involves His268. Residues Asn292, Asn297, Asn329, Asn354, and Asn364 are each glycosylated (N-linked (GlcNAc...) asparagine). A PbH1 5 repeat occupies 362-394; sequence PSNLTISDIHFKNFRGTTSGKRDPNVGTIVCSS. The cysteines at positions 392 and 398 are disulfide-linked.

Belongs to the glycosyl hydrolase 28 family.

It localises to the secreted. The enzyme catalyses [(1-&gt;4)-alpha-D-galacturonosyl](n) + H2O = alpha-D-galacturonate + [(1-&gt;4)-alpha-D-galacturonosyl](n-1). Specific in hydrolyzing the terminal glycosidic bond of polygalacturonic acid and oligogalacturonates. The polypeptide is Probable exopolygalacturonase X (pgaX) (Aspergillus fumigatus (strain CBS 144.89 / FGSC A1163 / CEA10) (Neosartorya fumigata)).